A 259-amino-acid chain; its full sequence is GTP cyclohydrolase FolE2 (259 aa).

It belongs to the GTP cyclohydrolase IV family.

The enzyme catalyses GTP + H2O = 7,8-dihydroneopterin 3'-triphosphate + formate + H(+). It participates in cofactor biosynthesis; 7,8-dihydroneopterin triphosphate biosynthesis; 7,8-dihydroneopterin triphosphate from GTP: step 1/1. Functionally, converts GTP to 7,8-dihydroneopterin triphosphate. The protein is GTP cyclohydrolase FolE2 of Thermotoga petrophila (strain ATCC BAA-488 / DSM 13995 / JCM 10881 / RKU-1).